A 319-amino-acid polypeptide reads, in one-letter code: Ribose-phosphate pyrophosphokinase (319 aa).

ATP contacts are provided by residues 40 to 42 (DGE) and 99 to 100 (RQ). 2 residues coordinate Mg(2+): H134 and D174. K198 is a catalytic residue. Residues R200, D224, and 228–232 (DTAGT) each bind D-ribose 5-phosphate.

The protein belongs to the ribose-phosphate pyrophosphokinase family. Class I subfamily. Homohexamer. Mg(2+) is required as a cofactor.

It is found in the cytoplasm. It carries out the reaction D-ribose 5-phosphate + ATP = 5-phospho-alpha-D-ribose 1-diphosphate + AMP + H(+). It functions in the pathway metabolic intermediate biosynthesis; 5-phospho-alpha-D-ribose 1-diphosphate biosynthesis; 5-phospho-alpha-D-ribose 1-diphosphate from D-ribose 5-phosphate (route I): step 1/1. Functionally, involved in the biosynthesis of the central metabolite phospho-alpha-D-ribosyl-1-pyrophosphate (PRPP) via the transfer of pyrophosphoryl group from ATP to 1-hydroxyl of ribose-5-phosphate (Rib-5-P). The sequence is that of Ribose-phosphate pyrophosphokinase from Coxiella burnetii (strain RSA 493 / Nine Mile phase I).